The primary structure comprises 728 residues: MAKVLTLLVLRLLMNLLLIGWISLWIIKPTTIWIQSWRQAEDTARHTFFGYYGLNFAVFSFPPIALSIVGLIYLSLLPQHHHPTRGGRGAAITVSRPAIINSFIGIVSCFEILALLLFLLFLAWNFYARVSNDFKKLMPVKTMNLNLWQLKYYRVATRFGLLAEACLSLLLFPVLRGLSMFRLLNIEFAASVKYHVWFGTGLIFFSLVHGGSTLFIWTITHHIEEEIWKWQRTGRVYVAGLISLVTGLLMWITSLPQIRRKNFEVFYYTHHLYIVFLVAFLFHAGDRHFYWVLPGMFLFGLDKILRIVQSRSESCILSANLFSCKAIELVLPKDPMLNYAPSSFIFLNIPLVSRFQWHPFSIISSSSVDKHSLSIMMKCEGDWTNSVYNKIEEAANCENKINNIIVRVEGPYGPASVDFLRYDNLFLVAGGIGITPFLSILKELASKNRLKSPKRVQLVFAVRTFQDLNMLLPIASIIFNPIYNLNLKLKVFVTQEKKPSNGTTTLQEFLAQSQVQSIHLGTDEDYSRFPIRGPESFRWLATLVLITVLTFLGFLIGLSHFFIPSEHKNHSGVMKLAASGAMKTAKEKVPSWVPDLIIIVSYVIAISVGGFAATILQRRRKHKEAPRMSKEVVIKPEERNFTELKPIPITEEHEIHIGERPKLEEIMSEFEKNLRGWSSVGVLVCGPESVKEAVASMCRQWPQCFGVEDLRRSRMKMNLNFHSLNFNL.

Residues 1–24 constitute a mitochondrion transit peptide; sequence MAKVLTLLVLRLLMNLLLIGWISL. The next 5 helical transmembrane spans lie at 56–74, 104–127, 194–217, 269–293, and 316–336; these read FAVF…LIYL, IGIV…WNFY, YHVW…LFIW, THHL…YWVL, and ILSA…KDPM. A Ferric oxidoreductase domain is found at 159–281; that stretch reads FGLLAEACLS…LYIVFLVAFL (123 aa). Residues H195, H209, H270, and H283 each coordinate heme. In terms of domain architecture, FAD-binding FR-type spans 300 to 418; the sequence is GLDKILRIVQ…EGPYGPASVD (119 aa). An FAD-binding site is contributed by 358 to 361; the sequence is HPFS. Position 410 to 413 (410 to 413) interacts with NAD(+); sequence GPYG. 2 consecutive transmembrane segments (helical) span residues 537–559 and 595–616; these read FRWL…IGLS and DLII…ATIL.

Belongs to the ferric reductase (FRE) family. FAD serves as cofactor. As to expression, expressed in shoots. Detected in roots, pedicels, flowers, siliques and leaf veins.

It is found in the mitochondrion membrane. The enzyme catalyses 2 a Fe(II)-siderophore + NAD(+) + H(+) = 2 a Fe(III)-siderophore + NADH. Ferric chelate reductase probably involved in iron reduction in leaf veins for transport. May participate in the transport of electrons to a Fe(3+) ion via FAD and heme intermediates. This is Ferric reduction oxidase 8, mitochondrial (FRO8) from Arabidopsis thaliana (Mouse-ear cress).